A 96-amino-acid chain; its full sequence is Co-chaperonin GroES (96 aa).

The protein belongs to the GroES chaperonin family. As to quaternary structure, heptamer of 7 subunits arranged in a ring. Interacts with the chaperonin GroEL.

The protein resides in the cytoplasm. Functionally, together with the chaperonin GroEL, plays an essential role in assisting protein folding. The GroEL-GroES system forms a nano-cage that allows encapsulation of the non-native substrate proteins and provides a physical environment optimized to promote and accelerate protein folding. GroES binds to the apical surface of the GroEL ring, thereby capping the opening of the GroEL channel. The polypeptide is Co-chaperonin GroES (Geotalea uraniireducens (strain Rf4) (Geobacter uraniireducens)).